The chain runs to 100 residues: Urease subunit gamma (100 aa).

Belongs to the urease gamma subunit family. Heterotrimer of UreA (gamma), UreB (beta) and UreC (alpha) subunits. Three heterotrimers associate to form the active enzyme.

It localises to the cytoplasm. It catalyses the reaction urea + 2 H2O + H(+) = hydrogencarbonate + 2 NH4(+). Its pathway is nitrogen metabolism; urea degradation; CO(2) and NH(3) from urea (urease route): step 1/1. The protein is Urease subunit gamma of Parasynechococcus marenigrum (strain WH8102).